A 453-amino-acid chain; its full sequence is F-box/FBD/LRR-repeat protein At4g00160 (453 aa).

The F-box domain occupies 15–68 (KDRISELPDALLIKILSFLPTKIVVATSVFSKQWRPLWKLVPNLEFDSEDYDDK). 6 LRR repeats span residues 89 to 111 (LESFRLEFESEKVDPVDIGLWVG), 165 to 190 (MKSLRTLHLELVSYKDESSIRNLLSG), 215 to 239 (VPSLKRLTINDDHDGQEFWGYVINA), 247 to 270 (IEDLRCPGFCLNAPELMEANIFDG), 282 to 307 (LTSVKRLLLNLSPWKITYPTGSIFYQ), and 331 to 358 (SPKLQVLKLTDNCVKFHKNGLPGGKWNE). Residues 355–406 (KWNEPKYVPECLLSHLETFVWRRFDWGREEEKEIATYILKNARRLNKATFST) enclose the FBD domain.

This Arabidopsis thaliana (Mouse-ear cress) protein is F-box/FBD/LRR-repeat protein At4g00160.